The chain runs to 297 residues: Nitrogenase iron protein (297 aa).

11 to 18 serves as a coordination point for ATP; sequence GKGGIGKS. Cysteine 99 is a [4Fe-4S] cluster binding site. ADP-ribosylarginine; by dinitrogenase reductase ADP-ribosyltransferase is present on arginine 102. Position 133 (cysteine 133) interacts with [4Fe-4S] cluster.

The protein belongs to the NifH/BchL/ChlL family. As to quaternary structure, homodimer. [4Fe-4S] cluster is required as a cofactor. The reversible ADP-ribosylation of Arg-102 inactivates the nitrogenase reductase and regulates nitrogenase activity.

The catalysed reaction is N2 + 8 reduced [2Fe-2S]-[ferredoxin] + 16 ATP + 16 H2O = H2 + 8 oxidized [2Fe-2S]-[ferredoxin] + 2 NH4(+) + 16 ADP + 16 phosphate + 6 H(+). In terms of biological role, the key enzymatic reactions in nitrogen fixation are catalyzed by the nitrogenase complex, which has 2 components: the iron protein and the molybdenum-iron protein. The protein is Nitrogenase iron protein (nifH) of Rhizobium etli.